A 267-amino-acid chain; its full sequence is B3 domain-containing protein Os02g0455800 (267 aa).

Positions 30 to 131 form a DNA-binding region, TF-B3; that stretch reads EKFLMPSDLC…RLFICCRLGT (102 aa). The interval 172 to 221 is disordered; sequence QARLHDGNQDGGGAPSRHVPSSGRRVEAQLSRVSSRRQRRTMKHSIPEPT. Residues 205–214 show a composition bias toward basic residues; it reads SSRRQRRTMK.

It localises to the nucleus. The sequence is that of B3 domain-containing protein Os02g0455800 from Oryza sativa subsp. japonica (Rice).